A 403-amino-acid chain; its full sequence is Argininosuccinate synthase (403 aa).

ATP is bound by residues alanine 13–serine 21 and alanine 40. L-citrulline-binding residues include tyrosine 91 and serine 96. Residue glycine 121 participates in ATP binding. Positions 123, 127, and 128 each coordinate L-aspartate. L-citrulline is bound at residue asparagine 127. L-citrulline-binding residues include arginine 131, serine 180, serine 189, glutamate 265, and tyrosine 277.

This sequence belongs to the argininosuccinate synthase family. Type 1 subfamily. Homotetramer.

It localises to the cytoplasm. It carries out the reaction L-citrulline + L-aspartate + ATP = 2-(N(omega)-L-arginino)succinate + AMP + diphosphate + H(+). It participates in amino-acid biosynthesis; L-arginine biosynthesis; L-arginine from L-ornithine and carbamoyl phosphate: step 2/3. The polypeptide is Argininosuccinate synthase (Leptospira interrogans serogroup Icterohaemorrhagiae serovar Lai (strain 56601)).